Reading from the N-terminus, the 650-residue chain is MKAVLLLLCALGTAVAIPTSTRFLSDHSNPTTATLVTPEDATVPIAGVEATADIENHPSDKAEKPSALNSEEETHEQSTEQDKTYSFEVDLKDEEDGDGDLSVDPTEGTLTLDLQEGTSEPQQKSLPENGDFPATVSTSYVDPNQRANITKGKESQEQPVSDSHQQPNESSKQTQDLKAEESQTQDPDIPNEEEEEEEDEEEEEEEEPEDIGAPSDNQEEGKEPLEEQPTSKWEGNREQSDDTLEESSQPTQISKTEKHQSEQGNQGQESDSEAEGEDKAAGSKEHIPHTEQQDQEGKAGLEAIGNQKDTDEKAVSTEPTDAAVVPRSHGGAGDNGGGDDSKHGAGDDYFIPSQEFLEAERMHSLSYYLKYGGGEETTTGESENRREAADNQEAKKAESSPNAEPSDEGNSREHSAGSCTNFQCKRGHICKTDPQGKPHCVCQDPETCPPAKILDQACGTDNQTYASSCHLFATKCRLEGTKKGHQLQLDYFGACKSIPACTDFEVAQFPLRMRDWLKNILMQLYEPNPKHGGYLNEKQRSKVKKIYLDEKRLLAGDHPIELLLRDFKKNYHMYVYPVHWQFNELDQHPADRILTHSELAPLRASLVPMEHCITRFFEECDPNKDKHITLKEWGHCFGIKEEDIDENLLF.

An N-terminal signal peptide occupies residues 1–16 (MKAVLLLLCALGTAVA). Residues 51-352 (TADIENHPSD…HGAGDDYFIP (302 aa)) are disordered. The segment covering 54–64 (IENHPSDKAEK) has biased composition (basic and acidic residues). Phosphoserine occurs at positions 70, 78, and 86. The segment covering 75 to 85 (HEQSTEQDKTY) has biased composition (basic and acidic residues). The span at 91-101 (LKDEEDGDGDL) shows a compositional bias: acidic residues. 2 stretches are compositionally biased toward polar residues: residues 116-126 (EGTSEPQQKSL) and 135-148 (TVST…QRAN). The N-linked (GlcNAc...) asparagine glycan is linked to N148. Phosphoserine is present on residues S155 and S163. Polar residues predominate over residues 157 to 174 (EQPVSDSHQQPNESSKQT). The N-linked (GlcNAc...) asparagine glycan is linked to N168. A compositionally biased stretch (acidic residues) spans 189–210 (IPNEEEEEEEDEEEEEEEEPED). S272 carries the post-translational modification Phosphoserine. The segment covering 277–299 (EDKAAGSKEHIPHTEQQDQEGKA) has biased composition (basic and acidic residues). At S353 the chain carries Phosphoserine. Residues 375 to 415 (EETTTGESENRREAADNQEAKKAESSPNAEPSDEGNSREHS) are disordered. Basic and acidic residues predominate over residues 382–398 (SENRREAADNQEAKKAE). Phosphoserine is present on S406. One can recognise a Follistatin-like domain in the interval 418 to 440 (SCTNFQCKRGHICKTDPQGKPHC). 7 cysteine pairs are disulfide-bonded: C419-C430, C424-C440, C442-C476, C448-C469, C458-C495, C501-C612, and C620-C636. The Kazal-like domain maps to 436–497 (GKPHCVCQDP…QLDYFGACKS (62 aa)). The N-linked (GlcNAc...) asparagine glycan is linked to N462. The EF-hand domain occupies 608–643 (PMEHCITRFFEECDPNKDKHITLKEWGHCFGIKEED). Residues D621, N623, D625, H627, and E632 each coordinate Ca(2+).

It belongs to the SPARC family. Highest expression in brain. Moderate levels in heart, adrenal gland, epididymis and lung. Low levels in kidney, eye, liver, spleen, submandibular gland and testis.

It localises to the secreted. The protein localises to the extracellular space. It is found in the extracellular matrix. The polypeptide is SPARC-like protein 1 (Sparcl1) (Mus musculus (Mouse)).